Consider the following 167-residue polypeptide: ATP synthase subunit b (167 aa).

A helical membrane pass occupies residues 7–25; the sequence is SFLLAVSFVIFIYLIYRPA.

It belongs to the ATPase B chain family. In terms of assembly, F-type ATPases have 2 components, F(1) - the catalytic core - and F(0) - the membrane proton channel. F(1) has five subunits: alpha(3), beta(3), gamma(1), delta(1), epsilon(1). F(0) has three main subunits: a(1), b(2) and c(10-14). The alpha and beta chains form an alternating ring which encloses part of the gamma chain. F(1) is attached to F(0) by a central stalk formed by the gamma and epsilon chains, while a peripheral stalk is formed by the delta and b chains.

The protein resides in the cell inner membrane. Functionally, f(1)F(0) ATP synthase produces ATP from ADP in the presence of a proton or sodium gradient. F-type ATPases consist of two structural domains, F(1) containing the extramembraneous catalytic core and F(0) containing the membrane proton channel, linked together by a central stalk and a peripheral stalk. During catalysis, ATP synthesis in the catalytic domain of F(1) is coupled via a rotary mechanism of the central stalk subunits to proton translocation. Component of the F(0) channel, it forms part of the peripheral stalk, linking F(1) to F(0). The sequence is that of ATP synthase subunit b from Rickettsia typhi (strain ATCC VR-144 / Wilmington).